We begin with the raw amino-acid sequence, 327 residues long: MPHLAELVAKARTAIEEAQDVAALENVRVEYLGKKGHLTLQMTSLRELPAEERPAAGAVINQAKQDVQDALNARKHTLESAELNARLAQETIDVSLPGRTIENGGLHPVTRTIDRIETFFGELGFSVVTGPEIEDDYHNFDALNIPGHHPARADHDTFWFDATRLLRTQTSGVQIRTMEKQQPPIRIIAPGRVYRNDYDQTHTPMFHQMEGLIVDKDISFTNLKGTLHDFLRNFFEEDLQVRFRPSYFPFTEPSAEVDVMGKNGKWLEVLGCGMVHPNVLRNVGIDPEVYSGFAFGMGMERLTMLRYGVTDLRAFFENDLRFLKQFK.

Mg(2+) is bound at residue E252.

This sequence belongs to the class-II aminoacyl-tRNA synthetase family. Phe-tRNA synthetase alpha subunit type 1 subfamily. Tetramer of two alpha and two beta subunits. Mg(2+) is required as a cofactor.

The protein resides in the cytoplasm. The catalysed reaction is tRNA(Phe) + L-phenylalanine + ATP = L-phenylalanyl-tRNA(Phe) + AMP + diphosphate + H(+). This chain is Phenylalanine--tRNA ligase alpha subunit, found in Pectobacterium carotovorum subsp. carotovorum (strain PC1).